The following is a 213-amino-acid chain: Thymidine kinase (213 aa).

Residues 22-29 (GSMFSGKT) and 94-97 (DEAQ) each bind ATP. The Proton acceptor role is filled by Glu-95. Zn(2+) is bound by residues Cys-151, Cys-154, Cys-183, and Cys-186. Residues 185–213 (RCFQPPRPTSTSSLKAPAPAATAPRPELP) are disordered. Over residues 193-213 (TSTSSLKAPAPAATAPRPELP) the composition is skewed to low complexity.

This sequence belongs to the thymidine kinase family. In terms of assembly, homotetramer.

Its subcellular location is the cytoplasm. The catalysed reaction is thymidine + ATP = dTMP + ADP + H(+). The chain is Thymidine kinase from Rhodothermus sp. (strain ITI 518).